A 69-amino-acid polypeptide reads, in one-letter code: Large ribosomal subunit protein bL31 (69 aa).

Residues cysteine 16, cysteine 18, cysteine 36, and cysteine 39 each contribute to the Zn(2+) site.

It belongs to the bacterial ribosomal protein bL31 family. Type A subfamily. In terms of assembly, part of the 50S ribosomal subunit. Requires Zn(2+) as cofactor.

Functionally, binds the 23S rRNA. The protein is Large ribosomal subunit protein bL31 of Thermosipho africanus (strain TCF52B).